The chain runs to 942 residues: NBPF family member NBPF8 (942 aa).

Residues 89-130 (AEELRQYKVLVHSQERELTQLKEKLQEGRDASRSLNEHLQAL) are a coiled coil. Residues 161-203 (KLSPENDEDEDEDVQVEEDEKVQKSSAPREVQKAEESKVPEDS) are disordered. The span at 165 to 180 (ENDEDEDEDVQVEEDE) shows a compositional bias: acidic residues. Residues 165–259 (ENDEDEDEDV…ECQDALNILS (95 aa)) enclose the Olduvai 1 domain. Residues 190–201 (EVQKAEESKVPE) are compositionally biased toward basic and acidic residues. The stretch at 339–401 (KSMLRNERQF…LSLNEHLQAL (63 aa)) forms a coiled coil. Olduvai domains follow at residues 436 to 528 (ENDN…HIIP), 529 to 617 (ENES…ATGP), 620 to 675 (SREL…VDMD), 676 to 767 (EIEK…PPCP), 770 to 843 (SREL…RSKK), and 844 to 904 (KRRR…RSVF). Disordered regions lie at residues 451–474 (EKVQKSSAPREMQKAEEKEVPEDS) and 528–566 (PENESDDEEEEEKGPVSPRNLQESEEEEVPQESWDEGYS). Acidic residues-rich tracts occupy residues 530–539 (NESDDEEEEE) and 550–562 (ESEEEEVPQESWD). Over residues 831–849 (GKGKIRRGRRSKKKRRRGR) the composition is skewed to basic residues. Residues 831-863 (GKGKIRRGRRSKKKRRRGRKEGEEDQNPPCPRL) form a disordered region.

It belongs to the NBPF family. As to expression, expressed in the mammary gland.

It is found in the cytoplasm. This Homo sapiens (Human) protein is NBPF family member NBPF8.